The primary structure comprises 873 residues: F-BAR domain only protein 1 (873 aa).

The F-BAR domain occupies 1–248 (MSYFGEHFWG…NVENVTVDML (248 aa)). A mediates membrane-binding region spans residues 1–275 (MSYFGEHFWG…LDFDAYSSAA (275 aa)). Residues 153–172 (RENTSQKEMDKAETKSKKAA) are disordered. Residues 155–178 (NTSQKEMDKAETKSKKAADSLRRS) are a coiled coil. The tract at residues 267–439 (DFDAYSSAAL…KSLFGPPLES (173 aa)) is mediates interaction with the adaptor protein complex AP-2. Phosphoserine occurs at positions 295, 343, and 368. The tract at residues 302 to 347 (SVDFLESDSGVPPEVDDEGFTVRPDISQNNGAEPPRFSSSDSDFDD) is disordered. Disordered stretches follow at residues 381–600 (GSLI…RGPS) and 813–833 (SGHLSASWQPQSGPSTPSPVA). Low complexity predominate over residues 447–466 (TGSSSLGFTSSPSPFSSSSP). The residue at position 518 (Ser-518) is a Phosphoserine. Over residues 567–576 (SLSPSPLGSS) the composition is skewed to low complexity. The tract at residues 593 to 873 (HGISRGPSPV…FATGMYLVSC (281 aa)) is mediates interaction with AGFG1, CALM, DAB2, EPS15, EPS15R, ITSN1 and clathrin. Ser-600 is subject to Phosphoserine. One can recognise an MHD domain in the interval 609 to 872 (ALPVATAFTE…RFATGMYLVS (264 aa)). A compositionally biased stretch (polar residues) spans 816–827 (LSASWQPQSGPS).

This sequence belongs to the FCHO family. As to quaternary structure, may oligomerize and form homotetramer. Interacts with AP2A2 and AP2B1; 2 subunits of the adaptor protein complex AP-2. Interacts with DAB2. Interacts with clathrin (CLTC or CLTCL1). Interacts with EPS15, EPS15R and ITSN1. Interacts with AGFG1 and CALM. May interact with ACVR1; linking this receptor to clathrin-mediated endocytosis. As to expression, mainly detected in brain and spleen.

It localises to the membrane. It is found in the clathrin-coated pit. Functions in an early step of clathrin-mediated endocytosis. Has both a membrane binding/bending activity and the ability to recruit proteins essential to the formation of functional clathrin-coated pits. May regulate Bmp signaling by regulating clathrin-mediated endocytosis of Bmp receptors. Involved in the regulation of T-cell poliferation and activation. Affects TCR clustering upon receptor triggering and modulates its internalisation, playing a role in TCR-dependent T-cell activation. This chain is F-BAR domain only protein 1, found in Mus musculus (Mouse).